The chain runs to 157 residues: Probable succinate transporter subunit YjjB (157 aa).

4 helical membrane passes run 8-28, 50-70, 87-107, and 129-149; these read LALA…AMVF, MILM…SMLV, VFTV…TAMI, and FLTA…PGLW.

Belongs to the ThrE exporter (TC 2.A.79) family. As to quaternary structure, the transporter is composed of YjjB and YjjP.

The protein localises to the cell inner membrane. In terms of biological role, involved in succinate export with YjjP. Both proteins are required for export. The sequence is that of Probable succinate transporter subunit YjjB from Escherichia coli O1:K1 / APEC.